We begin with the raw amino-acid sequence, 407 residues long: MINLKKYIPEGSRDILFEECTIKNNIENILRNSYINVGYEEVRSPTLEFYDVYNLENQPISQEKMYKLFDNTGRILVLRPDMTTPIARICATKLKNRVYPLKLSYTGNIYRMNKALNGKISEITQSGIEILGFSSLKADAEVIITAIKAILKTGLKNFKIEIGQVEFFKSIISDTALKEQDTEKLRNFIENKNFSKVEEFILRNSDLIGETSSKVLMNLPNLFGGKEVIEKAEQLTSNKQAIEALKKVRDLYDIVKRAGFGEYILIDLGMVQHINYYTGLIFRGYAHGIGDDLLSGGRYDKLLGQFGYDIPATGLAINVDNLVAALDDCVRENLYSRDRYVVFASSCNIEKAYEAVSKLNSEGKRAEVSLFDNIEETKKYCIENKISKIFNADTGKTIVEENYYGQK.

This sequence belongs to the class-II aminoacyl-tRNA synthetase family. HisZ subfamily. Heteromultimer composed of HisG and HisZ subunits.

The protein localises to the cytoplasm. It functions in the pathway amino-acid biosynthesis; L-histidine biosynthesis; L-histidine from 5-phospho-alpha-D-ribose 1-diphosphate: step 1/9. In terms of biological role, required for the first step of histidine biosynthesis. May allow the feedback regulation of ATP phosphoribosyltransferase activity by histidine. The sequence is that of ATP phosphoribosyltransferase regulatory subunit (hisZ) from Clostridium acetobutylicum (strain ATCC 824 / DSM 792 / JCM 1419 / IAM 19013 / LMG 5710 / NBRC 13948 / NRRL B-527 / VKM B-1787 / 2291 / W).